A 303-amino-acid chain; its full sequence is Probable cat1 operon transcriptional activator (303 aa).

The HTH lysR-type domain occupies 1-58 (MDLRQFRYFVAVARERNFTRAARQLNIAQPPLSRQIQLLEEEVGVPLLIRNSRPVQLT). A DNA-binding region (H-T-H motif) is located at residues 18–37 (FTRAARQLNIAQPPLSRQIQ).

The protein belongs to the LysR transcriptional regulatory family.

In terms of biological role, probable positive regulator of the cat1 operon which encode enzymes responsible for the degradation of catechol to acetyl-CoA via the beta-ketoadipate pathway. The chain is Probable cat1 operon transcriptional activator from Acinetobacter lwoffii.